The following is a 125-amino-acid chain: Histone H2A.v3 (125 aa).

Belongs to the histone H2A family. As to quaternary structure, the nucleosome is a histone octamer containing two molecules each of H2A, H2B, H3 and H4 assembled in one H3-H4 heterotetramer and two H2A-H2B heterodimers. The octamer wraps approximately 147 bp of DNA.

The protein localises to the nucleus. It is found in the chromosome. Core component of nucleosome which plays a central role in DNA double strand break (DSB) repair. Nucleosomes wrap and compact DNA into chromatin, limiting DNA accessibility to the cellular machineries which require DNA as a template. Histones thereby play a central role in transcription regulation, DNA repair, DNA replication and chromosomal stability. DNA accessibility is regulated via a complex set of post-translational modifications of histones, also called histone code, and nucleosome remodeling. The chain is Histone H2A.v3 (H2Av3) from Dictyostelium discoideum (Social amoeba).